The sequence spans 360 residues: DNA replication and repair protein RecF (360 aa).

ATP is bound at residue 30–37; that stretch reads GQNGSGKT.

It belongs to the RecF family.

The protein localises to the cytoplasm. In terms of biological role, the RecF protein is involved in DNA metabolism; it is required for DNA replication and normal SOS inducibility. RecF binds preferentially to single-stranded, linear DNA. It also seems to bind ATP. The chain is DNA replication and repair protein RecF from Shewanella baltica (strain OS155 / ATCC BAA-1091).